The primary structure comprises 504 residues: Maturase K (504 aa).

It belongs to the intron maturase 2 family. MatK subfamily.

It localises to the plastid. The protein localises to the chloroplast. Functionally, usually encoded in the trnK tRNA gene intron. Probably assists in splicing its own and other chloroplast group II introns. In Quercus petraea (Durmast oak), this protein is Maturase K.